The chain runs to 126 residues: Adenosine 5'-monophosphoramidase HINT1 (126 aa).

Ala2 is modified (N-acetylalanine). Positions 18–126 (IFGKIIRKEI…GGRQMHWPPG (109 aa)) constitute an HIT domain. 2 positions are modified to N6-acetyllysine: Lys21 and Lys30. AMP is bound at residue 43-44 (DI). Ser45 and Ser72 each carry phosphoserine. Residues Asn99, 105-107 (GQS), and 112-114 (HLH) contribute to the AMP site. Positions 110–114 (HVHLH) match the Histidine triad motif motif. Residue His112 is the Tele-AMP-histidine intermediate of the active site.

The protein belongs to the HINT family. Homodimer. Interacts with CDK7. Interacts with RUVBL1 and RUVBL2 and is associated with the LEF1/TCF1-CTNNB1 complex and with a KAT5 histone acetyltransferase complex. Identified in a complex with MITF and CTNNB1. Interacts with CDC34 and RBX1, and is part of a SCF (SKP2-CUL1-F-box protein) E3 ubiquitin-protein ligase complex. Interacts with SUMO1, SUMO2 and RGS17. Interacts with the Ten-1 ICD form of TENM1. Interacts with CALM1; interaction increases in the presence of calcium ions. Widely expressed.

It is found in the cytoplasm. It localises to the nucleus. It catalyses the reaction adenosine 5'-phosphoramidate + H2O = AMP + NH4(+). Exhibits adenosine 5'-monophosphoramidase activity, hydrolyzing purine nucleotide phosphoramidates with a single phosphate group such as adenosine 5'monophosphoramidate (AMP-NH2) to yield AMP and NH2. Hydrolyzes adenosine 5'monophosphomorpholidate (AMP-morpholidate) and guanosine 5'monophosphomorpholidate (GMP-morpholidate). Hydrolyzes lysyl-AMP (AMP-N-epsilon-(N-alpha-acetyl lysine methyl ester)) generated by lysine tRNA ligase, as well as Met-AMP, His-AMP and Asp-AMP, lysyl-GMP (GMP-N-epsilon-(N-alpha-acetyl lysine methyl ester)) and AMP-N-alanine methyl ester. Hydrolyzes 3-indolepropionic acyl-adenylate, tryptamine adenosine phosphoramidate monoester and other fluorogenic purine nucleoside tryptamine phosphoramidates in vitro. Can also convert adenosine 5'-O-phosphorothioate and guanosine 5'-O-phosphorothioate to the corresponding nucleoside 5'-O-phosphates with concomitant release of hydrogen sulfide. In addition, functions as scaffolding protein that modulates transcriptional activation by the LEF1/TCF1-CTNNB1 complex and by the complex formed with MITF and CTNNB1. Modulates p53/TP53 levels and p53/TP53-mediated apoptosis. Modulates proteasomal degradation of target proteins by the SCF (SKP2-CUL1-F-box protein) E3 ubiquitin-protein ligase complex. Also exhibits SUMO-specific isopeptidase activity, deconjugating SUMO1 from RGS17. Deconjugates SUMO1 from RANGAP1. This is Adenosine 5'-monophosphoramidase HINT1 (HINT1) from Homo sapiens (Human).